The following is a 903-amino-acid chain: Protein translocase subunit SecA (903 aa).

ATP contacts are provided by residues Q87, 105-109, and D507; that span reads GEGKT. Residues 854-893 are disordered; the sequence is STMADSSGDVKSSTAESKAPYVRDGRKVGRNEPCPCGSGK. Polar residues predominate over residues 856 to 869; sequence MADSSGDVKSSTAE. A compositionally biased stretch (basic and acidic residues) spans 874 to 883; it reads YVRDGRKVGR. The Zn(2+) site is built by C887, C889, C898, and H899.

The protein belongs to the SecA family. In terms of assembly, monomer and homodimer. Part of the essential Sec protein translocation apparatus which comprises SecA, SecYEG and auxiliary proteins SecDF-YajC and YidC. Zn(2+) serves as cofactor.

It localises to the cell inner membrane. Its subcellular location is the cytoplasm. The catalysed reaction is ATP + H2O + cellular proteinSide 1 = ADP + phosphate + cellular proteinSide 2.. Part of the Sec protein translocase complex. Interacts with the SecYEG preprotein conducting channel. Has a central role in coupling the hydrolysis of ATP to the transfer of proteins into and across the cell membrane, serving both as a receptor for the preprotein-SecB complex and as an ATP-driven molecular motor driving the stepwise translocation of polypeptide chains across the membrane. The sequence is that of Protein translocase subunit SecA from Nitrosococcus oceani (strain ATCC 19707 / BCRC 17464 / JCM 30415 / NCIMB 11848 / C-107).